We begin with the raw amino-acid sequence, 507 residues long: uncharacterized protein (507 aa).

The next 12 membrane-spanning stretches (helical) occupy residues 46 to 66 (WIVL…WIGY), 83 to 103 (AWLS…AMWA), 112 to 132 (AVLI…ISSL), 141 to 161 (FPIC…IMFL), 181 to 201 (IGVM…PAIV), 207 to 227 (VIWL…IATF), 263 to 283 (IILL…YTVM), 299 to 319 (VCAA…SIFV), 328 to 348 (TLKI…QLTL), 354 to 374 (VILG…YPIG), 389 to 409 (TSTG…VFIM), and 442 to 462 (MSIM…VVLF). Basic and acidic residues predominate over residues 477–493 (ATADKAKELSNQNKDRI). The tract at residues 477–507 (ATADKAKELSNQNKDRITLQAESAVEPLQKK) is disordered.

It is found in the membrane. This is an uncharacterized protein from Caenorhabditis elegans.